Reading from the N-terminus, the 597-residue chain is Elongation factor 4 (597 aa).

The tr-type G domain maps to 2-184; the sequence is DHIRNFSIIA…SLIAKVPPPK (183 aa). GTP-binding positions include 14–19 and 131–134; these read DHGKST and NKID.

The protein belongs to the TRAFAC class translation factor GTPase superfamily. Classic translation factor GTPase family. LepA subfamily.

It localises to the cell inner membrane. It carries out the reaction GTP + H2O = GDP + phosphate + H(+). Required for accurate and efficient protein synthesis under certain stress conditions. May act as a fidelity factor of the translation reaction, by catalyzing a one-codon backward translocation of tRNAs on improperly translocated ribosomes. Back-translocation proceeds from a post-translocation (POST) complex to a pre-translocation (PRE) complex, thus giving elongation factor G a second chance to translocate the tRNAs correctly. Binds to ribosomes in a GTP-dependent manner. The sequence is that of Elongation factor 4 from Burkholderia pseudomallei (strain 1710b).